An 86-amino-acid chain; its full sequence is Large ribosomal subunit protein bL31B (86 aa).

The protein belongs to the bacterial ribosomal protein bL31 family. Type B subfamily. Part of the 50S ribosomal subunit.

The chain is Large ribosomal subunit protein bL31B from Yersinia pseudotuberculosis serotype O:1b (strain IP 31758).